The chain runs to 175 residues: Translation initiation factor IF-3 (175 aa).

Belongs to the IF-3 family. In terms of assembly, monomer.

It is found in the cytoplasm. Functionally, IF-3 binds to the 30S ribosomal subunit and shifts the equilibrium between 70S ribosomes and their 50S and 30S subunits in favor of the free subunits, thus enhancing the availability of 30S subunits on which protein synthesis initiation begins. This is Translation initiation factor IF-3 from Staphylococcus epidermidis (strain ATCC 35984 / DSM 28319 / BCRC 17069 / CCUG 31568 / BM 3577 / RP62A).